Here is a 133-residue protein sequence, read N- to C-terminus: AWNRRSRSCGGVLRDPPGKIFNSDGPQKDCVWTIKVKPHFHVVIAIPPLNLSCGKEYVELLDGPPGSEIIGKICGGISLVFRSSSNIATIKYLRTSGQRASPFHIYYYADPEGPLPFPYFERQTIIATEKNIP.

Ala-1 is modified (N-acetylalanine). 2 disulfides stabilise this stretch: Cys-9–Cys-30 and Cys-53–Cys-74. The CUB domain maps to 9–110 (CGGVLRDPPG…SPFHIYYYAD (102 aa)). The tract at residues 73–110 (ICGGISLVFRSSSNIATIKYLRTSGQRASPFHIYYYAD) is heparin-binding.

Belongs to the spermadhesin family.

It is found in the secreted. Mediates the binding of spermatozoa to component(s) of the egg's zona pellucida by a carbohydrate-binding mechanism. It is a secretory component of the male accessory glands being coated to the sperm surface at the time of ejaculation. This chain is Carbohydrate-binding protein AWN, found in Equus caballus (Horse).